A 296-amino-acid chain; its full sequence is Protein-export membrane protein SecF (296 aa).

6 helical membrane passes run 23–43 (MIIY…ANYV), 144–164 (AIVY…RVPV), 169–189 (VVFS…IFGI), 194–214 (ATIA…ILLT), 236–256 (GFTM…FSTA), and 265–285 (VLIF…AGVL).

Belongs to the SecD/SecF family. SecF subfamily. As to quaternary structure, part of the protein translocation apparatus. Forms a complex with SecD.

The protein localises to the cell membrane. In terms of biological role, involved in protein export. The sequence is that of Protein-export membrane protein SecF from Pyrococcus furiosus (strain ATCC 43587 / DSM 3638 / JCM 8422 / Vc1).